Consider the following 394-residue polypeptide: Endothelial cell-selective adhesion molecule (394 aa).

A signal peptide spans M1 to A29. The Extracellular segment spans residues Q30–A251. Positions P37–K146 constitute an Ig-like V-type domain. Residues N111, N172, N216, and N239 are each glycosylated (N-linked (GlcNAc...) asparagine). In terms of domain architecture, Ig-like C2-type spans P156–D243. C177 and C227 are disulfide-bonded. Residues V252–L272 traverse the membrane as a helical segment. At L273–V394 the chain is on the cytoplasmic side. Residues W300–S372 form a disordered region. Polar residues-rich tracts occupy residues G303–S318 and F335–S347. At S304 the chain carries Phosphoserine. 2 positions are modified to phosphothreonine: T336 and T338. Phosphoserine occurs at positions 340, 343, and 348.

Interacts with MAGI1.

The protein resides in the cell junction. Its subcellular location is the adherens junction. The protein localises to the tight junction. It is found in the cell membrane. In terms of biological role, can mediate aggregation most likely through a homophilic molecular interaction. The sequence is that of Endothelial cell-selective adhesion molecule (Esam) from Rattus norvegicus (Rat).